A 649-amino-acid chain; its full sequence is Acetyl-coenzyme A synthetase (649 aa).

CoA is bound by residues 191-194 (RGGR), T311, and N335. Residues 387–389 (GEP), 411–416 (DTWWQT), D500, and R515 contribute to the ATP site. S523 is a binding site for CoA. R526 serves as a coordination point for ATP. 3 residues coordinate Mg(2+): V537, H539, and I542. R584 provides a ligand contact to CoA. The residue at position 609 (K609) is an N6-acetyllysine.

It belongs to the ATP-dependent AMP-binding enzyme family. Mg(2+) is required as a cofactor. Acetylated. Deacetylation by the SIR2-homolog deacetylase activates the enzyme.

The catalysed reaction is acetate + ATP + CoA = acetyl-CoA + AMP + diphosphate. Catalyzes the conversion of acetate into acetyl-CoA (AcCoA), an essential intermediate at the junction of anabolic and catabolic pathways. AcsA undergoes a two-step reaction. In the first half reaction, AcsA combines acetate with ATP to form acetyl-adenylate (AcAMP) intermediate. In the second half reaction, it can then transfer the acetyl group from AcAMP to the sulfhydryl group of CoA, forming the product AcCoA. The sequence is that of Acetyl-coenzyme A synthetase from Psychromonas ingrahamii (strain DSM 17664 / CCUG 51855 / 37).